Reading from the N-terminus, the 246-residue chain is MLVLFVATWSDLGLCKKRPKPGGWNTGGSRYPGQGSPGGNRYPPQGGGGWGQPHGGGWGQPHGGGWGQPHGGGWGQPHGGGWGQGGGTHNQWHKPSKPKTSMKHMAGAAAAGAVVGGLGGYMLGSAMSRPLIHFGNDYEDRYYRENMYRYPNQVYYRPVDQYSNQNNFVHDCVNITIKQHTVTTTTKGENFTETDVKMMERVVEQMCITQYEKESQAYYQRGSSMVLFSSPPVILLISFLIFLIVG.

The first 15 residues, 1 to 15 (MLVLFVATWSDLGLC), serve as a signal peptide directing secretion. The tract at residues 16 to 223 (KKRPKPGGWN…ESQAYYQRGS (208 aa)) is interaction with GRB2, ERI3 and SYN1. The tract at residues 18–102 (RPKPGGWNTG…HKPSKPKTSM (85 aa)) is disordered. 5 tandem repeats follow at residues 44 to 52 (PQGGGGWGQ), 53 to 60 (PHGGGWGQ), 61 to 68 (PHGGGWGQ), 69 to 76 (PHGGGWGQ), and 77 to 84 (PHGGGWGQ). The tract at residues 44–84 (PQGGGGWGQPHGGGWGQPHGGGWGQPHGGGWGQPHGGGWGQ) is 5 X 8 AA tandem repeats of P-H-G-G-G-W-G-Q. Over residues 45–88 (QGGGGWGQPHGGGWGQPHGGGWGQPHGGGWGQPHGGGWGQGGGT) the composition is skewed to gly residues. Residues His54, Gly55, Gly56, His62, Gly63, Gly64, His70, Gly71, Gly72, His78, Gly79, and Gly80 each contribute to the Cu(2+) site. Over residues 91 to 102 (QWHKPSKPKTSM) the composition is skewed to basic residues. Cys172 and Cys207 are joined by a disulfide. Residues Asn174 and Asn190 are each glycosylated (N-linked (GlcNAc...) asparagine). A lipid anchor (GPI-anchor amidated serine) is attached at Ser223. Residues 224-246 (SMVLFSSPPVILLISFLIFLIVG) constitute a propeptide, removed in mature form.

Belongs to the prion family. As to quaternary structure, monomer and homodimer. Has a tendency to aggregate into amyloid fibrils containing a cross-beta spine, formed by a steric zipper of superposed beta-strands. Soluble oligomers may represent an intermediate stage on the path to fibril formation. Copper binding may promote oligomerization. Interacts with GRB2, APP, ERI3/PRNPIP and SYN1. Mislocalized cytosolically exposed PrP interacts with MGRN1; this interaction alters MGRN1 subcellular location and causes lysosomal enlargement. Interacts with KIAA1191.

It is found in the cell membrane. The protein localises to the golgi apparatus. Its primary physiological function is unclear. Has cytoprotective activity against internal or environmental stresses. May play a role in neuronal development and synaptic plasticity. May be required for neuronal myelin sheath maintenance. May play a role in iron uptake and iron homeostasis. Soluble oligomers are toxic to cultured neuroblastoma cells and induce apoptosis (in vitro). Association with GPC1 (via its heparan sulfate chains) targets PRNP to lipid rafts. Also provides Cu(2+) or Zn(2+) for the ascorbate-mediated GPC1 deaminase degradation of its heparan sulfate side chains. This chain is Major prion protein (PRNP), found in Cercopithecus mona (Mona monkey).